A 121-amino-acid chain; its full sequence is Large ribosomal subunit protein uL18 (121 aa).

Belongs to the universal ribosomal protein uL18 family. Part of the 50S ribosomal subunit; part of the 5S rRNA/L5/L18/L25 subcomplex. Contacts the 5S and 23S rRNAs.

Its function is as follows. This is one of the proteins that bind and probably mediate the attachment of the 5S RNA into the large ribosomal subunit, where it forms part of the central protuberance. The chain is Large ribosomal subunit protein uL18 from Mesomycoplasma hyopneumoniae (strain 232) (Mycoplasma hyopneumoniae).